Reading from the N-terminus, the 199-residue chain is Pneumococcal vaccine antigen A homolog (199 aa).

The protein localises to the cell surface. The chain is Pneumococcal vaccine antigen A homolog (pvaA) from Streptococcus pyogenes serotype M18 (strain MGAS8232).